The following is a 428-amino-acid chain: Enolase (428 aa).

Q163 provides a ligand contact to (2R)-2-phosphoglycerate. E205 serves as the catalytic Proton donor. 3 residues coordinate Mg(2+): D242, E283, and D310. (2R)-2-phosphoglycerate is bound by residues K335, R364, S365, and K386. K335 functions as the Proton acceptor in the catalytic mechanism.

Belongs to the enolase family. Mg(2+) is required as a cofactor.

The protein localises to the cytoplasm. The protein resides in the secreted. Its subcellular location is the cell surface. It catalyses the reaction (2R)-2-phosphoglycerate = phosphoenolpyruvate + H2O. It functions in the pathway carbohydrate degradation; glycolysis; pyruvate from D-glyceraldehyde 3-phosphate: step 4/5. Catalyzes the reversible conversion of 2-phosphoglycerate (2-PG) into phosphoenolpyruvate (PEP). It is essential for the degradation of carbohydrates via glycolysis. The chain is Enolase from Streptomyces avermitilis (strain ATCC 31267 / DSM 46492 / JCM 5070 / NBRC 14893 / NCIMB 12804 / NRRL 8165 / MA-4680).